The sequence spans 103 residues: MVKVIDIGRVVVKVLGREAGRKAVVVDVVDENYVLITGPKTLTGVKRRRVNINHIEPTDKKVEIKRGASDEEVIKAVEAAGLVEYMRERVKPKMLGLTKAEVK.

Belongs to the eukaryotic ribosomal protein eL14 family.

This is Large ribosomal subunit protein eL14 from Pyrobaculum arsenaticum (strain DSM 13514 / JCM 11321 / PZ6).